The primary structure comprises 358 residues: Histidinol-phosphate aminotransferase (358 aa).

N6-(pyridoxal phosphate)lysine is present on Lys-218.

This sequence belongs to the class-II pyridoxal-phosphate-dependent aminotransferase family. Histidinol-phosphate aminotransferase subfamily. Homodimer. Pyridoxal 5'-phosphate is required as a cofactor.

It catalyses the reaction L-histidinol phosphate + 2-oxoglutarate = 3-(imidazol-4-yl)-2-oxopropyl phosphate + L-glutamate. Its pathway is amino-acid biosynthesis; L-histidine biosynthesis; L-histidine from 5-phospho-alpha-D-ribose 1-diphosphate: step 7/9. The chain is Histidinol-phosphate aminotransferase from Dehalococcoides mccartyi (strain CBDB1).